Here is a 377-residue protein sequence, read N- to C-terminus: Chaperone protein DnaJ (377 aa).

The 66-residue stretch at 5–70 folds into the J domain; sequence DYYQILGIPK…EKRSAYDQYG (66 aa). The CR-type zinc-finger motif lies at 132–210; it reads GIKKEIQIPT…CHGQGRVETY (79 aa). Residues cysteine 145, cysteine 148, cysteine 162, cysteine 165, cysteine 184, cysteine 187, cysteine 198, and cysteine 201 each contribute to the Zn(2+) site. CXXCXGXG motif repeat units lie at residues 145–152, 162–169, 184–191, and 198–205; these read CKTCYGSG, CSTCHGKG, CPTCHGKG, and CNLCHGQG.

Belongs to the DnaJ family. As to quaternary structure, homodimer. Requires Zn(2+) as cofactor.

The protein resides in the cytoplasm. In terms of biological role, participates actively in the response to hyperosmotic and heat shock by preventing the aggregation of stress-denatured proteins and by disaggregating proteins, also in an autonomous, DnaK-independent fashion. Unfolded proteins bind initially to DnaJ; upon interaction with the DnaJ-bound protein, DnaK hydrolyzes its bound ATP, resulting in the formation of a stable complex. GrpE releases ADP from DnaK; ATP binding to DnaK triggers the release of the substrate protein, thus completing the reaction cycle. Several rounds of ATP-dependent interactions between DnaJ, DnaK and GrpE are required for fully efficient folding. Also involved, together with DnaK and GrpE, in the DNA replication of plasmids through activation of initiation proteins. This chain is Chaperone protein DnaJ, found in Buchnera aphidicola subsp. Acyrthosiphon pisum (strain Tuc7).